Consider the following 237-residue polypeptide: Orotidine 5'-phosphate decarboxylase (237 aa).

Substrate contacts are provided by residues D10, K33, 60 to 69 (DLKLHDIPNT), T123, R185, Q194, G214, and R215. K62 serves as the catalytic Proton donor.

Belongs to the OMP decarboxylase family. Type 1 subfamily. Homodimer.

The enzyme catalyses orotidine 5'-phosphate + H(+) = UMP + CO2. Its pathway is pyrimidine metabolism; UMP biosynthesis via de novo pathway; UMP from orotate: step 2/2. Catalyzes the decarboxylation of orotidine 5'-monophosphate (OMP) to uridine 5'-monophosphate (UMP). In Enterococcus faecalis (strain ATCC 700802 / V583), this protein is Orotidine 5'-phosphate decarboxylase.